Consider the following 240-residue polypeptide: tRNA (guanine-N(1)-)-methyltransferase (240 aa).

Residues Gly111 and Ile130–Ile135 contribute to the S-adenosyl-L-methionine site.

This sequence belongs to the RNA methyltransferase TrmD family. Homodimer.

Its subcellular location is the cytoplasm. The enzyme catalyses guanosine(37) in tRNA + S-adenosyl-L-methionine = N(1)-methylguanosine(37) in tRNA + S-adenosyl-L-homocysteine + H(+). Functionally, specifically methylates guanosine-37 in various tRNAs. In Mycoplasma mycoides subsp. mycoides SC (strain CCUG 32753 / NCTC 10114 / PG1), this protein is tRNA (guanine-N(1)-)-methyltransferase.